Consider the following 569-residue polypeptide: MNYRIDRRTYAETYGPTVGDKVRLADTELFIEVEKDFTTYGDEVKFGGGKVIRDGMGQSPISREDGAVDLVITNALILDWWGIVKADVGIKDGKIYKIGKAGNPHIQDNVDIIIGPATEALAGEGMILTAGGIDAHIHFICPQQIETAIASGITTMIGGGTGPATGTNATTCTPGEWHIYRMLEAAEAFPMNLGFLGKGNSSQPEGLAEQVKAGVIGLKLHEDWGTTPAAIDTCLSVADKYDVQVAIHTDTLNEAGFVEATIAAFKNRVIHTYHTEGAGGGHAPDIIRVCGEMNVLPSSTNPTRPYTTNTLEEHLDMLMVCHHLDRSIPEDVAFAESRIRRETIAAEDILHDLGAFSIISSDSQAMGRVGEVIIRTWQTAHKMRVQRGRLTGETGENDNLRARRYIAKYTINPAITHGVSDYVGSIEVGKLADLVLWKPAFFGVKPEIVLKGGLIAWAQMGDANASIPTPQPVYMRPMFASFGGAIAKTSLTFVSKYAMKAGIPEKLKLKKTAVAVSNTRNISKASMKLNDALPRMEVNPETYEVRADGELLICEPATVLPMAQRYFLF.

Ni(2+) is bound by residues H136, H138, and K219. N6-carboxylysine is present on K219. H221 contacts substrate. Ni(2+) contacts are provided by H248 and H274. Residue H322 is the Proton donor of the active site. Ni(2+) is bound at residue D362.

Belongs to the metallo-dependent hydrolases superfamily. Urease alpha subunit family. In terms of assembly, heterotrimer of UreA (gamma), UreB (beta) and UreC (alpha) subunits. Three heterotrimers associate to form the active enzyme. It depends on Ni cation as a cofactor. Post-translationally, carboxylation allows a single lysine to coordinate two nickel ions.

Its subcellular location is the cytoplasm. It carries out the reaction urea + 2 H2O + H(+) = hydrogencarbonate + 2 NH4(+). The protein operates within nitrogen metabolism; urea degradation; CO(2) and NH(3) from urea (urease route): step 1/1. This Microcystis aeruginosa (strain NIES-843 / IAM M-2473) protein is Urease subunit alpha.